We begin with the raw amino-acid sequence, 92 residues long: Large ribosomal subunit protein bL28 (92 aa).

It belongs to the bacterial ribosomal protein bL28 family.

The polypeptide is Large ribosomal subunit protein bL28 (Borreliella burgdorferi (strain ATCC 35210 / DSM 4680 / CIP 102532 / B31) (Borrelia burgdorferi)).